A 1158-amino-acid polypeptide reads, in one-letter code: ATP-dependent helicase/deoxyribonuclease subunit B (1158 aa).

8-15 is a binding site for ATP; sequence GRAGTGKS. C791, C1112, C1115, and C1121 together coordinate [4Fe-4S] cluster.

This sequence belongs to the helicase family. AddB/RexB type 1 subfamily. As to quaternary structure, heterodimer of AddA and AddB. It depends on Mg(2+) as a cofactor. The cofactor is [4Fe-4S] cluster.

In terms of biological role, the heterodimer acts as both an ATP-dependent DNA helicase and an ATP-dependent, dual-direction single-stranded exonuclease. Recognizes the chi site generating a DNA molecule suitable for the initiation of homologous recombination. The AddB subunit has 5' -&gt; 3' nuclease activity but not helicase activity. The polypeptide is ATP-dependent helicase/deoxyribonuclease subunit B (Clostridium perfringens (strain 13 / Type A)).